The chain runs to 270 residues: Mediator of RNA polymerase II transcription subunit 4 (270 aa).

Residues 1–22 form a disordered region; sequence MAASSSGEKEKERLGGGLGVAG. Ala-2 carries the post-translational modification N-acetylalanine. Coiled-coil stretches lie at residues 24 to 48 and 90 to 131; these read NSTR…IEML and HHEM…AKEK. Ser-32 carries the post-translational modification Phosphoserine. The segment at 226–270 is disordered; it reads DMSMNMLPPNHSSDFLLEPPGHNKENEDDVEIMSTDSSSSSSESD. The segment covering 259-270 has biased composition (low complexity); the sequence is STDSSSSSSESD.

Belongs to the Mediator complex subunit 4 family. In terms of assembly, component of the Mediator complex, which is composed of MED1, MED4, MED6, MED7, MED8, MED9, MED10, MED11, MED12, MED13, MED13L, MED14, MED15, MED16, MED17, MED18, MED19, MED20, MED21, MED22, MED23, MED24, MED25, MED26, MED27, MED29, MED30, MED31, CCNC, CDK8 and CDC2L6/CDK11. The MED12, MED13, CCNC and CDK8 subunits form a distinct module termed the CDK8 module. Mediator containing the CDK8 module is less active than Mediator lacking this module in supporting transcriptional activation. Individual preparations of the Mediator complex lacking one or more distinct subunits have been variously termed ARC, CRSP, DRIP, PC2, SMCC and TRAP.

It localises to the nucleus. Its function is as follows. Component of the Mediator complex, a coactivator involved in the regulated transcription of nearly all RNA polymerase II-dependent genes. Mediator functions as a bridge to convey information from gene-specific regulatory proteins to the basal RNA polymerase II transcription machinery. Mediator is recruited to promoters by direct interactions with regulatory proteins and serves as a scaffold for the assembly of a functional preinitiation complex with RNA polymerase II and the general transcription factors. The chain is Mediator of RNA polymerase II transcription subunit 4 (MED4) from Homo sapiens (Human).